The sequence spans 222 residues: Chalcone--flavanone isomerase 1 (222 aa).

The substrate site is built by T48, N113, and T190.

The protein belongs to the chalcone isomerase family.

It catalyses the reaction a chalcone = a flavanone.. The protein operates within secondary metabolite biosynthesis; flavonoid biosynthesis. Catalyzes the intramolecular cyclization of bicyclic chalcones into tricyclic (S)-flavanones. Responsible for the isomerization of 4,2',4',6'-tetrahydroxychalcone (also termed chalcone) into naringenin. This chain is Chalcone--flavanone isomerase 1 (CHI1), found in Medicago sativa (Alfalfa).